The primary structure comprises 637 residues: Rab11 family-interacting protein 4 (637 aa).

The 36-residue stretch at 49–84 (GQGEEVEKLVKYLDPNDLGRINFKDFCRGVFAMKGC) folds into the EF-hand domain. Ca(2+) is bound by residues Asp62, Asn64, Arg68, and Asp73. The interval 82–637 (KGCEELLKDV…HNPSILEIKH (556 aa)) is necessary for interaction with RAB11A, subcellular location, homo- or heterooligomerization. Disordered regions lie at residues 138 to 175 (EEEAMTLAPPEGPQELYTDSPMESTQSLEGSVGSPAEK) and 219 to 256 (YGEGDDVDCAPSSPCPDDETRTNVYSDLGSSVSSSAGQ). Residues 280-617 (KINLLNDLEA…EEINFRLRQY (338 aa)) are a coiled coil. One can recognise an FIP-RBD domain in the interval 574–636 (EAKNLFAAQT…DHNPSILEIK (63 aa)).

As to quaternary structure, homodimer. Forms a complex with Rab11 (RAB11A or RAB11B) and ARF6. Interacts with RAB11A; the interaction is direct. Forms a heterooligomeric complex with RAB11FIP2, RAB11FIP3 and RAB11FIP5. Interacts with ECPAS. (Microbial infection) Interacts with human cytomegalovirus/HHV-5 protein gM/UL100. As to expression, present at high level in testis (at protein level). Weakly expressed in other tissues.

It is found in the endosome. It localises to the cytoplasm. The protein resides in the cytoskeleton. The protein localises to the spindle. Its subcellular location is the microtubule organizing center. It is found in the centrosome. It localises to the recycling endosome membrane. The protein resides in the cleavage furrow. The protein localises to the midbody. Its subcellular location is the cytoplasmic vesicle. Acts as a regulator of endocytic traffic by participating in membrane delivery. Required for the abscission step in cytokinesis, possibly by acting as an 'address tag' delivering recycling endosome membranes to the cleavage furrow during late cytokinesis. In case of infection by HCMV (human cytomegalovirus), may participate in egress of the virus out of nucleus; this function is independent of ARF6. The protein is Rab11 family-interacting protein 4 (RAB11FIP4) of Homo sapiens (Human).